Consider the following 184-residue polypeptide: ATP synthase subunit b, chloroplastic (184 aa).

A helical transmembrane segment spans residues Leu-27 to Leu-49.

It belongs to the ATPase B chain family. As to quaternary structure, F-type ATPases have 2 components, F(1) - the catalytic core - and F(0) - the membrane proton channel. F(1) has five subunits: alpha(3), beta(3), gamma(1), delta(1), epsilon(1). F(0) has four main subunits: a(1), b(1), b'(1) and c(10-14). The alpha and beta chains form an alternating ring which encloses part of the gamma chain. F(1) is attached to F(0) by a central stalk formed by the gamma and epsilon chains, while a peripheral stalk is formed by the delta, b and b' chains.

It localises to the plastid. The protein resides in the chloroplast thylakoid membrane. Functionally, f(1)F(0) ATP synthase produces ATP from ADP in the presence of a proton or sodium gradient. F-type ATPases consist of two structural domains, F(1) containing the extramembraneous catalytic core and F(0) containing the membrane proton channel, linked together by a central stalk and a peripheral stalk. During catalysis, ATP synthesis in the catalytic domain of F(1) is coupled via a rotary mechanism of the central stalk subunits to proton translocation. Component of the F(0) channel, it forms part of the peripheral stalk, linking F(1) to F(0). The chain is ATP synthase subunit b, chloroplastic from Nicotiana tabacum (Common tobacco).